A 510-amino-acid chain; its full sequence is Probable gamma-aminobutyrate transaminase 3, mitochondrial (510 aa).

A mitochondrion-targeting transit peptide spans 1–41; it reads MICRSLLLLRSNAASKASNIVKHVAATGCLPKYSSEAPARY. Residue 166–167 coordinates pyridoxal 5'-phosphate; sequence GS. Substrate is bound at residue Tyr199. Asp306 serves as a coordination point for pyridoxal 5'-phosphate. Position 335 (Lys335) interacts with substrate. Position 335 is an N6-(pyridoxal phosphate)lysine (Lys335).

It belongs to the class-III pyridoxal-phosphate-dependent aminotransferase family.

It is found in the mitochondrion. The catalysed reaction is 4-aminobutanoate + pyruvate = succinate semialdehyde + L-alanine. It catalyses the reaction 4-aminobutanoate + glyoxylate = succinate semialdehyde + glycine. In terms of biological role, transaminase that degrades gamma-amino butyric acid (GABA). The chain is Probable gamma-aminobutyrate transaminase 3, mitochondrial from Oryza sativa subsp. japonica (Rice).